The chain runs to 201 residues: Probable GTP-binding protein EngB (201 aa).

Residues Pro21–Val191 form the EngB-type G domain. GTP-binding positions include Gly29 to Ser36, Gly56 to Ser60, Asp75 to Gly78, Thr142 to Asp145, and Val168 to Ser172. Mg(2+) contacts are provided by Ser36 and Thr58.

It belongs to the TRAFAC class TrmE-Era-EngA-EngB-Septin-like GTPase superfamily. EngB GTPase family. The cofactor is Mg(2+).

Necessary for normal cell division and for the maintenance of normal septation. This chain is Probable GTP-binding protein EngB, found in Desulfovibrio desulfuricans (strain ATCC 27774 / DSM 6949 / MB).